Consider the following 319-residue polypeptide: Aliphatic sulfonates import ATP-binding protein SsuB (319 aa).

The ABC transporter domain occupies 63–282; that stretch reads VTLSGVSKRF…ARASAAFAAL (220 aa). Position 95–102 (95–102) interacts with ATP; sequence GRSGCGKS.

Belongs to the ABC transporter superfamily. Aliphatic sulfonates importer (TC 3.A.1.17.2) family. The complex is composed of two ATP-binding proteins (SsuB), two transmembrane proteins (SsuC) and a solute-binding protein (SsuA).

It is found in the cell inner membrane. The catalysed reaction is ATP + H2O + aliphatic sulfonate-[sulfonate-binding protein]Side 1 = ADP + phosphate + aliphatic sulfonateSide 2 + [sulfonate-binding protein]Side 1.. In terms of biological role, part of the ABC transporter complex SsuABC involved in aliphatic sulfonates import. Responsible for energy coupling to the transport system. This Burkholderia ambifaria (strain ATCC BAA-244 / DSM 16087 / CCUG 44356 / LMG 19182 / AMMD) (Burkholderia cepacia (strain AMMD)) protein is Aliphatic sulfonates import ATP-binding protein SsuB.